The primary structure comprises 56 residues: Protein hunchback (56 aa).

3 consecutive C2H2-type zinc fingers follow at residues 1-5 (HLRNH), 11-33 (FKCD…LKSH), and 39-56 (FRCS…SLKL).

It belongs to the hunchback C2H2-type zinc-finger protein family.

The protein resides in the nucleus. In terms of biological role, gap class segmentation protein that controls development of head structures. The chain is Protein hunchback (hb) from Euscelis plebejus (Leafhopper).